Consider the following 103-residue polypeptide: Cell division suppressor protein YneA (103 aa).

The LysM domain occupies 36–87 (VKIEVQSGDTLWGLADQVNDSKSIDKNAFIDWVTQHNDLASTEIQPGDILVI).

This sequence belongs to the YneA family.

Its subcellular location is the cytoplasm. In terms of biological role, inhibits cell division during the SOS response. Affects a later stage of the cell division protein assembly, after the assembly of the Z ring, by probably suppressing recruitment of FtsL and/or DivIC to the division machinery. The sequence is that of Cell division suppressor protein YneA from Bacillus pumilus (strain SAFR-032).